The chain runs to 113 residues: Ribonuclease P protein component (113 aa).

The protein belongs to the RnpA family. Consists of a catalytic RNA component (M1 or rnpB) and a protein subunit.

It catalyses the reaction Endonucleolytic cleavage of RNA, removing 5'-extranucleotides from tRNA precursor.. Functionally, RNaseP catalyzes the removal of the 5'-leader sequence from pre-tRNA to produce the mature 5'-terminus. It can also cleave other RNA substrates such as 4.5S RNA. The protein component plays an auxiliary but essential role in vivo by binding to the 5'-leader sequence and broadening the substrate specificity of the ribozyme. The protein is Ribonuclease P protein component of Finegoldia magna (strain ATCC 29328 / DSM 20472 / WAL 2508) (Peptostreptococcus magnus).